Consider the following 510-residue polypeptide: ETS translocation variant 5 (510 aa).

The segment at 131–208 is disordered; sequence FKPLTPPTTP…QPLQMPKMMP (78 aa). Over residues 161 to 174 the composition is skewed to low complexity; it reads GHAPAAGPVQGVGP. A compositionally biased stretch (pro residues) spans 175–185; sequence APAPHSLPEPG. S248 is subject to Phosphoserine. A Glycyl lysine isopeptide (Lys-Gly) (interchain with G-Cter in SUMO2) cross-link involves residue K350. Positions 368–448 form a DNA-binding region, ETS; the sequence is LQLWQFLVTL…AGERYVYKFV (81 aa).

In terms of assembly, interacts (via C-terminal) with ZMYM5 (via N-terminal 120 amino acid region). In terms of tissue distribution, ubiquitous.

The protein resides in the nucleus. Functionally, binds to DNA sequences containing the consensus nucleotide core sequence 5'-GGAA.-3'. This chain is ETS translocation variant 5 (ETV5), found in Homo sapiens (Human).